The following is a 79-amino-acid chain: Conotoxin ArMSGL-0122 (79 aa).

An N-terminal signal peptide occupies residues 1-20; it reads MSRLGIMVLTLLLLVFIVTS. Residues 21-44 constitute a propeptide that is removed on maturation; the sequence is HQDAGEKQATQRAAINFRWKRSLT. Intrachain disulfides connect cysteine 52-cysteine 64, cysteine 56-cysteine 73, and cysteine 63-cysteine 77. Leucine 78 carries the post-translational modification Leucine amide.

It belongs to the conotoxin O3 superfamily. As to expression, expressed by the venom duct.

The protein localises to the secreted. In Conus arenatus (Sand-dusted cone), this protein is Conotoxin ArMSGL-0122.